We begin with the raw amino-acid sequence, 557 residues long: Dihydroxy-acid dehydratase (557 aa).

C50 contributes to the [2Fe-2S] cluster binding site. Residue D82 coordinates Mg(2+). C123 is a binding site for [2Fe-2S] cluster. Mg(2+)-binding residues include D124 and K125. An N6-carboxylysine modification is found at K125. Residue C195 coordinates [2Fe-2S] cluster. E447 serves as a coordination point for Mg(2+). S473 functions as the Proton acceptor in the catalytic mechanism.

It belongs to the IlvD/Edd family. In terms of assembly, homodimer. Requires [2Fe-2S] cluster as cofactor. The cofactor is Mg(2+).

The enzyme catalyses (2R)-2,3-dihydroxy-3-methylbutanoate = 3-methyl-2-oxobutanoate + H2O. The catalysed reaction is (2R,3R)-2,3-dihydroxy-3-methylpentanoate = (S)-3-methyl-2-oxopentanoate + H2O. It participates in amino-acid biosynthesis; L-isoleucine biosynthesis; L-isoleucine from 2-oxobutanoate: step 3/4. The protein operates within amino-acid biosynthesis; L-valine biosynthesis; L-valine from pyruvate: step 3/4. Its function is as follows. Functions in the biosynthesis of branched-chain amino acids. Catalyzes the dehydration of (2R,3R)-2,3-dihydroxy-3-methylpentanoate (2,3-dihydroxy-3-methylvalerate) into 2-oxo-3-methylpentanoate (2-oxo-3-methylvalerate) and of (2R)-2,3-dihydroxy-3-methylbutanoate (2,3-dihydroxyisovalerate) into 2-oxo-3-methylbutanoate (2-oxoisovalerate), the penultimate precursor to L-isoleucine and L-valine, respectively. The polypeptide is Dihydroxy-acid dehydratase (Nitrosomonas europaea (strain ATCC 19718 / CIP 103999 / KCTC 2705 / NBRC 14298)).